The following is a 172-amino-acid chain: Adenine phosphoribosyltransferase (172 aa).

Belongs to the purine/pyrimidine phosphoribosyltransferase family. Homodimer.

Its subcellular location is the cytoplasm. It catalyses the reaction AMP + diphosphate = 5-phospho-alpha-D-ribose 1-diphosphate + adenine. Its pathway is purine metabolism; AMP biosynthesis via salvage pathway; AMP from adenine: step 1/1. Its function is as follows. Catalyzes a salvage reaction resulting in the formation of AMP, that is energically less costly than de novo synthesis. The protein is Adenine phosphoribosyltransferase of Prochlorococcus marinus (strain SARG / CCMP1375 / SS120).